The following is a 339-amino-acid chain: Holliday junction branch migration complex subunit RuvB (339 aa).

The segment at 2-187 is large ATPase domain (RuvB-L); it reads KDVNDEERII…FGIIEHMQYY (186 aa). ATP is bound by residues L26, R27, G68, K71, T72, T73, 134–136, R177, Y187, and R224; that span reads EDF. T72 is a Mg(2+) binding site. The segment at 188-258 is small ATPAse domain (RuvB-S); the sequence is SIDDLEKIIQ…TTKHSLHLLE (71 aa). The head domain (RuvB-H) stretch occupies residues 261 to 339; sequence DEGLDQTDRK…QLGYPPKKAE (79 aa). DNA contacts are provided by R316 and R321.

This sequence belongs to the RuvB family. Homohexamer. Forms an RuvA(8)-RuvB(12)-Holliday junction (HJ) complex. HJ DNA is sandwiched between 2 RuvA tetramers; dsDNA enters through RuvA and exits via RuvB. An RuvB hexamer assembles on each DNA strand where it exits the tetramer. Each RuvB hexamer is contacted by two RuvA subunits (via domain III) on 2 adjacent RuvB subunits; this complex drives branch migration. In the full resolvosome a probable DNA-RuvA(4)-RuvB(12)-RuvC(2) complex forms which resolves the HJ.

It is found in the cytoplasm. The enzyme catalyses ATP + H2O = ADP + phosphate + H(+). Functionally, the RuvA-RuvB-RuvC complex processes Holliday junction (HJ) DNA during genetic recombination and DNA repair, while the RuvA-RuvB complex plays an important role in the rescue of blocked DNA replication forks via replication fork reversal (RFR). RuvA specifically binds to HJ cruciform DNA, conferring on it an open structure. The RuvB hexamer acts as an ATP-dependent pump, pulling dsDNA into and through the RuvAB complex. RuvB forms 2 homohexamers on either side of HJ DNA bound by 1 or 2 RuvA tetramers; 4 subunits per hexamer contact DNA at a time. Coordinated motions by a converter formed by DNA-disengaged RuvB subunits stimulates ATP hydrolysis and nucleotide exchange. Immobilization of the converter enables RuvB to convert the ATP-contained energy into a lever motion, pulling 2 nucleotides of DNA out of the RuvA tetramer per ATP hydrolyzed, thus driving DNA branch migration. The RuvB motors rotate together with the DNA substrate, which together with the progressing nucleotide cycle form the mechanistic basis for DNA recombination by continuous HJ branch migration. Branch migration allows RuvC to scan DNA until it finds its consensus sequence, where it cleaves and resolves cruciform DNA. This Lactobacillus gasseri (strain ATCC 33323 / DSM 20243 / BCRC 14619 / CIP 102991 / JCM 1131 / KCTC 3163 / NCIMB 11718 / NCTC 13722 / AM63) protein is Holliday junction branch migration complex subunit RuvB.